A 326-amino-acid chain; its full sequence is Protein MICROTUBULE BINDING PROTEIN 2C (326 aa).

Polar residues-rich tracts occupy residues 1 to 15 (MYEQ…QSDS) and 34 to 46 (PHQS…SGNE). Disordered stretches follow at residues 1 to 46 (MYEQ…SGNE) and 71 to 132 (ERSS…KALA). Residues 132-183 (AGAEKEEMSRLREQVNDLQTKLSEKEEVLKSMEMSKNQVNEIQEKLEATNRL) are a coiled coil.

This sequence belongs to the microtubule binding protein 2C family. Interacts with STM. As to expression, expressed in seedlings, roots, flowers and developing ovules.

It is found in the cytoplasm. The protein resides in the cytoskeleton. In terms of biological role, prevents homeodomain proteins (e.g. STM) association to plasmodesmata and, consequently, cell-to-cell transport. Binds to RNA. Alters STM RNA binding capacity. Regulates cytoskeleton (e.g. actin) organization that determinates cell shape. Regulates stomata patterning and drought tolerance. Involved in restricting tobamovirus (e.g. oilseed rape mosaic virus) infectivity, probably by interfering with cell-to-cell virus movement. In Arabidopsis thaliana (Mouse-ear cress), this protein is Protein MICROTUBULE BINDING PROTEIN 2C.